A 202-amino-acid polypeptide reads, in one-letter code: T-cell surface glycoprotein CD3 epsilon chain (202 aa).

Residues 1 to 21 (MQSRNLWRILGLCLLSVGAWG) form the signal peptide. The Extracellular portion of the chain corresponds to 22–122 (QDEDFKASDD…VCANCIEVNL (101 aa)). In terms of domain architecture, Ig-like spans 37–107 (PEKRFKVSIS…ADSIKEKSYL (71 aa)). The cysteines at positions 54 and 96 are disulfide-linked. The helical transmembrane segment at 123 to 143 (MAVVTIIVADICLTLGLLLMV) threads the bilayer. The Cytoplasmic segment spans residues 144–202 (YYWSKTRKANAKPVMRGTGAGSRPRGQNKEKPPPVPNPDYEPIRKGQQDLYSGLNQRGI). Positions 156 to 202 (PVMRGTGAGSRPRGQNKEKPPPVPNPDYEPIRKGQQDLYSGLNQRGI) are disordered. Residues 170-187 (QNKEKPPPVPNPDYEPIR) are NUMB-binding region. Positions 173 to 200 (EKPPPVPNPDYEPIRKGQQDLYSGLNQR) constitute an ITAM domain. Residues 174–181 (KPPPVPNP) form a proline-rich sequence region. Phosphotyrosine occurs at positions 183 and 194. Residues 192–202 (DLYSGLNQRGI) are compositionally biased toward polar residues.

In terms of assembly, the TCR-CD3 complex is composed of a CD3D/CD3E and a CD3G/CD3E heterodimers that preferentially associate with TCRalpha and TCRbeta, respectively, to form TCRalpha/CD3E/CD3G and TCRbeta/CD3G/CD3E trimers. In turn, the hexamer interacts with CD3Z homodimer to form the TCR-CD3 complex. Alternatively, TCRalpha and TCRbeta can be replaced by TCRgamma and TCRdelta. Interacts with CD6. Interacts (via Proline-rich sequence) with NCK1; the interaction is ligand dependent but independent of tyrosine kinase activation. In terms of processing, phosphorylated on Tyr residues after T-cell receptor triggering by LCK in association with CD4/CD8.

The protein localises to the cell membrane. Its function is as follows. Part of the TCR-CD3 complex present on T-lymphocyte cell surface that plays an essential role in adaptive immune response. When antigen presenting cells (APCs) activate T-cell receptor (TCR), TCR-mediated signals are transmitted across the cell membrane by the CD3 chains CD3D, CD3E, CD3G and CD3Z. All CD3 chains contain immunoreceptor tyrosine-based activation motifs (ITAMs) in their cytoplasmic domain. Upon TCR engagement, these motifs become phosphorylated by Src family protein tyrosine kinases LCK and FYN, resulting in the activation of downstream signaling pathways. In addition of this role of signal transduction in T-cell activation, CD3E plays an essential role in correct T-cell development. Also participates in internalization and cell surface down-regulation of TCR-CD3 complexes via endocytosis sequences present in CD3E cytosolic region. In addition to its role as a TCR coreceptor, it serves as a receptor for ITPRIPL1. Ligand recognition inhibits T-cell activation by promoting interaction with NCK1, which prevents CD3E-ZAP70 interaction and blocks the ERK-NFkB signaling cascade and calcium influx. This is T-cell surface glycoprotein CD3 epsilon chain (CD3E) from Canis lupus familiaris (Dog).